A 1207-amino-acid polypeptide reads, in one-letter code: DNA-directed RNA polymerase subunit beta' (1207 aa).

Zn(2+) is bound by residues C60, C62, C75, and C78. 3 residues coordinate Mg(2+): D449, D451, and D453. Residues C822, C896, C903, and C906 each contribute to the Zn(2+) site.

This sequence belongs to the RNA polymerase beta' chain family. As to quaternary structure, the RNAP catalytic core consists of 2 alpha, 1 beta, 1 beta' and 1 omega subunit. When a sigma factor is associated with the core the holoenzyme is formed, which can initiate transcription. Mg(2+) serves as cofactor. It depends on Zn(2+) as a cofactor.

The enzyme catalyses RNA(n) + a ribonucleoside 5'-triphosphate = RNA(n+1) + diphosphate. Its function is as follows. DNA-dependent RNA polymerase catalyzes the transcription of DNA into RNA using the four ribonucleoside triphosphates as substrates. The chain is DNA-directed RNA polymerase subunit beta' from Staphylococcus epidermidis (strain ATCC 35984 / DSM 28319 / BCRC 17069 / CCUG 31568 / BM 3577 / RP62A).